A 978-amino-acid polypeptide reads, in one-letter code: Transcription factor MYCGRDRAFT_87993 (978 aa).

2 C2H2-type zinc fingers span residues Val-2–His-24 and Phe-30–His-52. Residues Cys-79–Cys-105 constitute a DNA-binding region (zn(2)-C6 fungal-type). Disordered regions lie at residues Ala-113–Phe-231 and Thr-426–Ala-445. Residues Ser-152 to Ser-165 are compositionally biased toward low complexity. Positions Gly-432 to Ala-445 are enriched in polar residues.

The protein resides in the nucleus. Functionally, transcription factor; part of the gene cluster 29 that mediates the biosynthesis of dihydroxynaphthalene (DHN)-melanin, a bluish-green pigment forming a dark layer in the conidial wall that protects the conidia from UV radiations. This chain is Transcription factor MYCGRDRAFT_87993, found in Zymoseptoria tritici (strain CBS 115943 / IPO323) (Speckled leaf blotch fungus).